The following is a 471-amino-acid chain: Glutamate--tRNA ligase 1 (471 aa).

The short motif at 15–25 (PSPTGYLHIGG) is the 'HIGH' region element. The 'KMSKS' region signature appears at 243–247 (KLSKR). K246 is a binding site for ATP.

This sequence belongs to the class-I aminoacyl-tRNA synthetase family. Glutamate--tRNA ligase type 1 subfamily. In terms of assembly, monomer.

It is found in the cytoplasm. The catalysed reaction is tRNA(Glu) + L-glutamate + ATP = L-glutamyl-tRNA(Glu) + AMP + diphosphate. Catalyzes the attachment of glutamate to tRNA(Glu) in a two-step reaction: glutamate is first activated by ATP to form Glu-AMP and then transferred to the acceptor end of tRNA(Glu). This Cereibacter sphaeroides (strain ATCC 17023 / DSM 158 / JCM 6121 / CCUG 31486 / LMG 2827 / NBRC 12203 / NCIMB 8253 / ATH 2.4.1.) (Rhodobacter sphaeroides) protein is Glutamate--tRNA ligase 1.